A 115-amino-acid chain; its full sequence is Inner membrane protein YidH (115 aa).

Over 1–30 the chain is Cytoplasmic; the sequence is MKISRLGEAPDYRFSLANERTFLAWIRTAL. Residues 31–51 traverse the membrane as a helical segment; the sequence is GFLAAGVGLDQLAPDFATPVI. Residues 52 to 53 lie on the Periplasmic side of the membrane; that stretch reads RE. A helical membrane pass occupies residues 54 to 74; the sequence is LLALLLCLFSGGLAMYGYLRW. The Cytoplasmic segment spans residues 75–92; that stretch reads LRNEKAMRLKEDLPYTNS. A helical membrane pass occupies residues 93–113; sequence LLIISLILMVVAVIVMGLVLY. Residues 114–115 lie on the Periplasmic side of the membrane; the sequence is AG.

The protein to M.tuberculosis Rv2272.

The protein localises to the cell inner membrane. This is Inner membrane protein YidH (yidH) from Escherichia coli O157:H7.